We begin with the raw amino-acid sequence, 145 residues long: Large ribosomal subunit protein uL14m (145 aa).

Residues 1 to 30 (MAFSSGLWGPCVHMSRAFSQRCFSTTGSLG) constitute a mitochondrion transit peptide.

It belongs to the universal ribosomal protein uL14 family. Component of the mitochondrial ribosome large subunit (39S) which comprises a 16S rRNA and about 50 distinct proteins. Interacts with MALSU1.

The protein resides in the mitochondrion. May form part of 2 intersubunit bridges in the assembled ribosome. Upon binding to MALSU1, intersubunit bridge formation is blocked, preventing ribosome formation and repressing translation. The polypeptide is Large ribosomal subunit protein uL14m (MRPL14) (Bos taurus (Bovine)).